Consider the following 516-residue polypeptide: MASDGARKQFWKRSNSKVPGSIQHVYGAQHPPFDPLLHGTLLKSTPKVPTTPVKAKRVSTFQEFESNTSDAWDAGEDDDELLAMATESLNSEVVMETAHRVLRNHSQRQSQPSQKTTEPEPEPQPIAEPPVPPSGDLRLVKSVSESHTPCPSESTGDTVPLQRSQSLPHSATVTLSGTSDPHALADSALSKRETSRLDKFKQLLAGPNTDLEELRKLSWSGIPKPVRPMTWKLLSGYLPANVDRRPATLQRKQKEYFAFIEHYYSSRNDEVHQDTYRQIHIDIPRMSPEALILQPKVTEIFERILFIWAIRHPASGYVQGINDLVTPFFVVFICEYTDREDVDKVDVSSVPAEVLRNIEADTYWCMSKLLDGIQDNYTFAQPGIQMKVKMLEELVSRIDERVHRHLDGHEVRYLQFAFRWMNNLLMRELPLRCTIRLWDTYQSEPEGFSHFHLYVCAAFLVRWRREILEERDFQELLLFLQNLPTARWDDQDVSLLLAEAYRLKFAFADAPNHYKK.

Ala-2 carries the N-acetylalanine modification. 2 disordered regions span residues 63-88 (EFES…ATES) and 102-186 (LRNH…ALAD). A compositionally biased stretch (polar residues) spans 107-116 (QRQSQPSQKT). The segment covering 122–133 (EPQPIAEPPVPP) has biased composition (pro residues). Polar residues predominate over residues 143–179 (VSESHTPCPSESTGDTVPLQRSQSLPHSATVTLSGTS). Phosphoserine occurs at positions 144 and 166. One can recognise a Rab-GAP TBC domain in the interval 221–445 (GIPKPVRPMT…RLWDTYQSEP (225 aa)).

Homodimer. Interacts with ACBD3 and ARFGEF1. Interacts with YWHAB, YWHAE, YWHAG, YWHAH, YWHAQ and YWHAZ.

May act as a GTPase-activating protein for Rab family protein(s). The polypeptide is TBC1 domain family member 22A (Tbc1d22a) (Mus musculus (Mouse)).